Reading from the N-terminus, the 143-residue chain is Large ribosomal subunit protein uL16 (143 aa).

The span at 1–14 shows a compositional bias: basic residues; that stretch reads MLTPKRVKWRRQHR. The interval 1–23 is disordered; the sequence is MLTPKRVKWRRQHRPDRAGKAKG.

It belongs to the universal ribosomal protein uL16 family. As to quaternary structure, part of the 50S ribosomal subunit.

In terms of biological role, binds 23S rRNA and is also seen to make contacts with the A and possibly P site tRNAs. The polypeptide is Large ribosomal subunit protein uL16 (Desulforudis audaxviator (strain MP104C)).